Consider the following 462-residue polypeptide: MAVEDFEAVLKAKYPGKAHAKRVVDLIRKTKPDANGVIYLEGRMTKLLEDNDSPEHFRQRRYFYYLTGCNLADCSFAYDIQSSKSILFIPPIDPDDVIWSGLPLSIDEALSRYDVDEVKFTTEVNSTLAHLAKQSPNSTVFAIANQVSDSVTFLEFGSKDFETVKKAIEVSRVVKDEFEVAMIRKANHISSLAHKAVIERSKAAATEQELYATFLERCVSHAAPEMAYHPILAAGKAAATLHYVDNNAPLKGKQNLLIDAGCEWNNYASDITRTFPLTGTFTKESRDIYDIVLRMQKECTELIKGGMLWDDLHLHAHKVAIDGLLALGILKGDAKEILNARTSAAFFPHGLGHHLGMDTHDTGGNPNPNDPDKLFRYLRLRGHVPAGAVVTVEPGIYFCDFIIKPYLDDHVHSKYIDAAVLNKYWDVGGVRIEDNIHVTENGYVNLTTAIKEVSDVEAVSAK.

Residues D259, D270, E393, and E433 each contribute to the Mn(2+) site.

Belongs to the peptidase M24B family. Requires Mn(2+) as cofactor.

The enzyme catalyses Release of any N-terminal amino acid, including proline, that is linked to proline, even from a dipeptide or tripeptide.. Functionally, catalyzes the removal of a penultimate prolyl residue from the N-termini of peptides. This chain is Probable Xaa-Pro aminopeptidase pepP (pepP), found in Metarhizium robertsii (strain ARSEF 23 / ATCC MYA-3075) (Metarhizium anisopliae (strain ARSEF 23)).